The primary structure comprises 344 residues: MHCPICHHRAHVVYCAHCINTSPSLLLKLKLDLILLKDENKELNGKVEQILNEAMNYDQLDIKRMEKKKDPLMNSLMKLDVLRMKKNNNLIRHRIEQLNERIYSKRNHISELKVEIDNYKCYKVGTGTDKLREQVEISDAKNKLAQVSKICESARDYKLNLLNNWFVIQKLQDNFQIPFAIAFQPLISLKNFRILPLAITNDSINIMWKYISFFSDILMIKLPYTNKICEQPMFEFSDSIQTVVQRLIKLIINILQICRHLKLVPSTPMDIPWLLDQYDVDGLFYNMVKRNKMKCRSVSLYWTFGMLYSMVLDNMNNPQRGHPARRTAPPPTVTGPHDRWYVVG.

A cysteine repeats region spans residues 3-18; the sequence is CPICHHRAHVVYCAHC. The stretch at 25–156 forms a coiled coil; it reads LLLKLKLDLI…VSKICESARD (132 aa).

This sequence belongs to the ATG14 family. Component of the autophagy-specific VPS34 PI3-kinase complex I composed of VPS15, VPS30, VPS34, ATG14 and ATG38. Interacts directly with ATG38.

The protein localises to the preautophagosomal structure membrane. It is found in the vacuole membrane. Functionally, required for cytoplasm to vacuole transport (Cvt) and autophagy as a part of the autophagy-specific VPS34 PI3-kinase complex I. This complex is essential to recruit the ATG8-phosphatidylinositol conjugate and the ATG12-ATG5 conjugate to the pre-autophagosomal structure. ATG14 mediates the specific binding of the VPS34 PI3-kinase complex I to the preautophagosomal structure (PAS). This Saccharomyces cerevisiae (strain ATCC 204508 / S288c) (Baker's yeast) protein is Autophagy-related protein 14 (ATG14).